The primary structure comprises 266 residues: Ribosomal RNA small subunit methyltransferase A (266 aa).

S-adenosyl-L-methionine is bound by residues Asn11, Leu13, Gly37, Glu57, Asp85, and Asn104.

It belongs to the class I-like SAM-binding methyltransferase superfamily. rRNA adenine N(6)-methyltransferase family. RsmA subfamily.

Its subcellular location is the cytoplasm. It carries out the reaction adenosine(1518)/adenosine(1519) in 16S rRNA + 4 S-adenosyl-L-methionine = N(6)-dimethyladenosine(1518)/N(6)-dimethyladenosine(1519) in 16S rRNA + 4 S-adenosyl-L-homocysteine + 4 H(+). Its function is as follows. Specifically dimethylates two adjacent adenosines (A1518 and A1519) in the loop of a conserved hairpin near the 3'-end of 16S rRNA in the 30S particle. May play a critical role in biogenesis of 30S subunits. The chain is Ribosomal RNA small subunit methyltransferase A from Campylobacter jejuni subsp. jejuni serotype O:2 (strain ATCC 700819 / NCTC 11168).